The chain runs to 209 residues: Imidazole glycerol phosphate synthase subunit HisH (209 aa).

A Glutamine amidotransferase type-1 domain is found at 3–209 (KIGLIDYGMG…WINWLKKNKF (207 aa)). The Nucleophile role is filled by C81. Catalysis depends on residues H185 and E187.

In terms of assembly, heterodimer of HisH and HisF.

It is found in the cytoplasm. The enzyme catalyses 5-[(5-phospho-1-deoxy-D-ribulos-1-ylimino)methylamino]-1-(5-phospho-beta-D-ribosyl)imidazole-4-carboxamide + L-glutamine = D-erythro-1-(imidazol-4-yl)glycerol 3-phosphate + 5-amino-1-(5-phospho-beta-D-ribosyl)imidazole-4-carboxamide + L-glutamate + H(+). The catalysed reaction is L-glutamine + H2O = L-glutamate + NH4(+). It functions in the pathway amino-acid biosynthesis; L-histidine biosynthesis; L-histidine from 5-phospho-alpha-D-ribose 1-diphosphate: step 5/9. In terms of biological role, IGPS catalyzes the conversion of PRFAR and glutamine to IGP, AICAR and glutamate. The HisH subunit catalyzes the hydrolysis of glutamine to glutamate and ammonia as part of the synthesis of IGP and AICAR. The resulting ammonia molecule is channeled to the active site of HisF. This is Imidazole glycerol phosphate synthase subunit HisH from Prochlorococcus marinus (strain NATL2A).